We begin with the raw amino-acid sequence, 308 residues long: tRNA dimethylallyltransferase (308 aa).

14-21 (GPTASGKT) is a binding site for ATP. Position 16–21 (16–21 (TASGKT)) interacts with substrate. 3 interaction with substrate tRNA regions span residues 39 to 42 (DSAL), 163 to 167 (QRLSR), and 244 to 249 (RCVGYR).

This sequence belongs to the IPP transferase family. Monomer. The cofactor is Mg(2+).

It carries out the reaction adenosine(37) in tRNA + dimethylallyl diphosphate = N(6)-dimethylallyladenosine(37) in tRNA + diphosphate. Catalyzes the transfer of a dimethylallyl group onto the adenine at position 37 in tRNAs that read codons beginning with uridine, leading to the formation of N6-(dimethylallyl)adenosine (i(6)A). The polypeptide is tRNA dimethylallyltransferase (Shewanella loihica (strain ATCC BAA-1088 / PV-4)).